Reading from the N-terminus, the 452-residue chain is Translation initiation factor eIF2B subunit gamma (452 aa).

Methionine 1 is subject to N-acetylmethionine. Serine 260 carries the post-translational modification Phosphoserine.

This sequence belongs to the eIF-2B gamma/epsilon subunits family. In terms of assembly, component of the translation initiation factor 2B (eIF2B) complex which is a heterodecamer of two sets of five different subunits: alpha, beta, gamma, delta and epsilon. Subunits alpha, beta and delta comprise a regulatory subcomplex and subunits epsilon and gamma comprise a catalytic subcomplex. Within the complex, the hexameric regulatory complex resides at the center, with the two heterodimeric catalytic subcomplexes bound on opposite sides.

It localises to the cytoplasm. The protein localises to the cytosol. Its activity is regulated as follows. Activated by the chemical integrated stress response (ISR) inhibitor ISRIB which stimulates guanine nucleotide exchange factor activity for both phosphorylated and unphosphorylated eIF2. Acts as a component of the translation initiation factor 2B (eIF2B) complex, which catalyzes the exchange of GDP for GTP on the eukaryotic initiation factor 2 (eIF2) complex gamma subunit. Its guanine nucleotide exchange factor activity is repressed when bound to eIF2 complex phosphorylated on the alpha subunit, thereby limiting the amount of methionyl-initiator methionine tRNA available to the ribosome and consequently global translation is repressed. The chain is Translation initiation factor eIF2B subunit gamma (EIF2B3) from Macaca fascicularis (Crab-eating macaque).